Consider the following 547-residue polypeptide: uncharacterized protein (547 aa).

To B.pertussis prn N-terminal region.

This is an uncharacterized protein from Escherichia coli O157:H7.